The sequence spans 635 residues: MANWSCQDALKMYNVPYWGAGFFNIDALGRVVVTPDKTRLDCKIALVDIIEQLRKQGYATPVLLRFPDIIKTRINALFGAFEQAIQSYGYKGRYQCVYPIKVNQQNQVIESVTRAFADKPALGLEAGSKPELLAVLSHHHDLGSVIVCNGYKDREYVRHALLGSLLGHHVYIVVEKPSELELILDEAARLNITPRIGVRARLASQGSGKWQASGGEKSKFGLNAAQILRLVERLREADKLDCLQLVHFHLGSQIANIRDIQGGIRECGRFYAELRHLGANIEVVDVGGGLGVDYEGSRSQSHCSANYNLREYANNVVWGIGDVCAEFDLPHPMIISESGRAITAHHAVLISNIVGMESQLPTSLPDAPDAEAPMLLQNMWDSWKELHEKEDPGLLEIFHDSVSDLADVHTQYTLGMLSLHQRAWAEDLHLNLCLKLKVMLDPVNRMHRNLQDELNEKLADKCFVNFSLFQSLPDAWGIDQIFPIMPLSGLDQQPTRRGVIMDITCDSDGMIKEYVDGVGIENSLPMPEMRNDETNYMGFFLVGAYQEILGDLHNLFGDTHSAEVCLNDNGEPVITNIIKGDNVDNLLRYVNIDTSVIRRDYQKLVAHPSLSEETRKALLEELEAGLQGYAYLEDE.

Position 101 is an N6-(pyridoxal phosphate)lysine (Lys101). 284-294 (VDVGGGLGVDY) contacts substrate.

It belongs to the Orn/Lys/Arg decarboxylase class-II family. SpeA subfamily. Requires Mg(2+) as cofactor. It depends on pyridoxal 5'-phosphate as a cofactor.

It carries out the reaction L-arginine + H(+) = agmatine + CO2. Its pathway is amine and polyamine biosynthesis; agmatine biosynthesis; agmatine from L-arginine: step 1/1. Catalyzes the biosynthesis of agmatine from arginine. This Tolumonas auensis (strain DSM 9187 / NBRC 110442 / TA 4) protein is Biosynthetic arginine decarboxylase.